A 375-amino-acid chain; its full sequence is Succinyl-diaminopimelate desuccinylase (375 aa).

Residue H66 coordinates Zn(2+). D68 is a catalytic residue. D99 is a binding site for Zn(2+). E133 (proton acceptor) is an active-site residue. Zn(2+) is bound by residues E134, E162, and H348.

The protein belongs to the peptidase M20A family. DapE subfamily. As to quaternary structure, homodimer. Zn(2+) serves as cofactor. It depends on Co(2+) as a cofactor.

It catalyses the reaction N-succinyl-(2S,6S)-2,6-diaminopimelate + H2O = (2S,6S)-2,6-diaminopimelate + succinate. It participates in amino-acid biosynthesis; L-lysine biosynthesis via DAP pathway; LL-2,6-diaminopimelate from (S)-tetrahydrodipicolinate (succinylase route): step 3/3. Catalyzes the hydrolysis of N-succinyl-L,L-diaminopimelic acid (SDAP), forming succinate and LL-2,6-diaminopimelate (DAP), an intermediate involved in the bacterial biosynthesis of lysine and meso-diaminopimelic acid, an essential component of bacterial cell walls. In Aeromonas salmonicida (strain A449), this protein is Succinyl-diaminopimelate desuccinylase.